A 152-amino-acid chain; its full sequence is Ubiquitin-conjugating enzyme E2 B (152 aa).

One can recognise a UBC core domain in the interval 4–150; it reads PARRRLMRDF…VSAIVEQSWN (147 aa). C88 (glycyl thioester intermediate) is an active-site residue.

It belongs to the ubiquitin-conjugating enzyme family. Interacts with RAD18, UBR2 and WAC.

Its subcellular location is the cell membrane. The protein resides in the nucleus. The enzyme catalyses S-ubiquitinyl-[E1 ubiquitin-activating enzyme]-L-cysteine + [E2 ubiquitin-conjugating enzyme]-L-cysteine = [E1 ubiquitin-activating enzyme]-L-cysteine + S-ubiquitinyl-[E2 ubiquitin-conjugating enzyme]-L-cysteine.. The protein operates within protein modification; protein ubiquitination. Its function is as follows. E2 ubiquitin-conjugating enzyme that accepts ubiquitin from the ubiquitin-activating enzyme E1 and transfers it to a E3 ubiquitin-protein ligase. In vitro catalyzes 'Lys-11'-, as well as 'Lys-48'- and 'Lys-63'-linked polyubiquitination. Together with the E3 enzyme BRE1 (RNF20 and/or RNF40), plays a role in transcription regulation by catalyzing the monoubiquitination of histone H2B at 'Lys-120' to form H2BK120ub1. H2BK120ub1 gives a specific tag for epigenetic transcriptional activation, elongation by RNA polymerase II, telomeric silencing, and is also a prerequisite for H3K4me and H3K79me formation. May play a role in DNA repair. Associates to the E3 ligase RAD18 to form the UBE2B-RAD18 ubiquitin ligase complex involved in mono-ubiquitination of DNA-associated PCNA on 'Lys-164'. In association with the E3 enzyme UBR4, is involved in N-end rule-dependent protein degradation. May be involved in neurite outgrowth. The protein is Ubiquitin-conjugating enzyme E2 B (UBE2B) of Bos taurus (Bovine).